The chain runs to 202 residues: Cold-regulated 413 plasma membrane protein 4 (202 aa).

Over 1–42 the chain is Extracellular; the sequence is MGRGEFLAMKTEENAANLINSDMNEFVAAAKKLVKDVGMLGG. The helical transmembrane segment at 43–63 threads the bilayer; that stretch reads VGFGTSVLQWAASIFAIYLLI. Topologically, residues 64-72 are cytoplasmic; that stretch reads LDRTNWKTK. The chain crosses the membrane as a helical span at residues 73–93; sequence MLTTLLVPYIFFTLPSVIFQF. Over 94-97 the chain is Extracellular; sequence FSGD. A helical membrane pass occupies residues 98–118; it reads FGKWIALIAIIVRLFFPKEFP. Glu119 is a topological domain (cytoplasmic). Residues 120–140 traverse the membrane as a helical segment; it reads WLEIPVALILIVVVSPSLIAW. At 141–145 the chain is on the extracellular side; it reads TLRES. A helical membrane pass occupies residues 146–166; it reads WVGAVICLVIACYLFHEHIKA. The Cytoplasmic portion of the chain corresponds to 167–181; sequence SGGFKNSFTQKNGIS. Residues 182 to 202 traverse the membrane as a helical segment; sequence NTIGIVALLVYPVWTIFFHIF.

This sequence belongs to the Cold-regulated 413 protein family.

The protein resides in the cell membrane. The polypeptide is Cold-regulated 413 plasma membrane protein 4 (Arabidopsis thaliana (Mouse-ear cress)).